An 893-amino-acid polypeptide reads, in one-letter code: Sulfate permease 2 (893 aa).

Residues 1–25 (MSREGYPNFEEVEIPDFQETNNTVP) form a disordered region. Topologically, residues 1–131 (MSREGYPNFE…VFPIINWLPH (131 aa)) are cytoplasmic. A helical membrane pass occupies residues 132–152 (YNFSWFTADLIAGITIGCVLV). At 153–163 (PQSMSYAQVAT) the chain is on the extracellular side. Residues 164-184 (LPAQYGLYSSFIGAYSYSFFA) traverse the membrane as a helical segment. Over 185 to 188 (TSKD) the chain is Cytoplasmic. A helical membrane pass occupies residues 189–209 (VCIGPVAVMSLQTAKVIADVT). At 210-221 (AKYPDGDSAITG) the chain is on the extracellular side. A helical transmembrane segment spans residues 222–242 (PVIATTLALLCGIISAAVGFL). Topologically, residues 243 to 244 (RL) are cytoplasmic. Residues 245-265 (GFLVELISLNAVAGFMTGSAF) traverse the membrane as a helical segment. At 266-305 (NILWGQVPALMGYNSLVNTRAATYKVVIETLKHLPDTKLD) the chain is on the extracellular side. Residues 306–326 (AVFGLIPLFLLYVWKWWCGTY) traverse the membrane as a helical segment. The Cytoplasmic portion of the chain corresponds to 327 to 350 (GPRLNDRYNSKNPRLHKIIKWTYF). The chain crosses the membrane as a helical span at residues 351–371 (YAQASRNGIIIIVFTCIGWAI). Residues 372-399 (TRGKSKSERPISILGSVPSGLKEVGVFH) lie on the Extracellular side of the membrane. A helical membrane pass occupies residues 400 to 420 (VPPGLMSKLGPNLPASIIVLL). The Cytoplasmic portion of the chain corresponds to 421 to 443 (LEHIAISKSFGRINDYKVVPDQE). A helical transmembrane segment spans residues 444-464 (LIAIGVSNLLGTFFNAYPATG). Topologically, residues 465–483 (SFSRSALKAKCNVRTPLSG) are extracellular. The chain crosses the membrane as a helical span at residues 484–504 (LFSGSCVLLALYCLTGAFFYI). Residues 505–532 (PKATLSAVIIHAVSDLLASYQTTWNFWK) are Cytoplasmic-facing. The chain crosses the membrane as a helical span at residues 533–551 (MNPLDFICFIVTVLITVFA). Topologically, residues 552-559 (SIEDGIYF) are extracellular. A helical membrane pass occupies residues 560-580 (AMCWSCAMLILKVAFPAGKFL). The Cytoplasmic segment spans residues 581–893 (GRVEVAEVTD…DIPDFAKWDI (313 aa)). The region spanning 676 to 854 (DVQILPPPDG…SIVAGHTSYH (179 aa)) is the STAS domain.

The protein belongs to the SLC26A/SulP transporter (TC 2.A.53) family.

The protein resides in the membrane. In terms of biological role, high affinity uptake of sulfate into the cell. In Saccharomyces cerevisiae (strain ATCC 204508 / S288c) (Baker's yeast), this protein is Sulfate permease 2 (SUL2).